The primary structure comprises 193 residues: Acyl-homoserine-lactone synthase (193 aa).

Belongs to the autoinducer synthase family.

It catalyses the reaction a fatty acyl-[ACP] + S-adenosyl-L-methionine = an N-acyl-L-homoserine lactone + S-methyl-5'-thioadenosine + holo-[ACP] + H(+). In terms of biological role, required for the synthesis of OHHL (N-(3-oxohexanoyl)-L-homoserine lactone) also known as VAI or N-(beta-ketocaproyl)homoserine lactone or 3-oxo-N-(tetrahydro-2-oxo-3-furanyl)-hexanamide, an autoinducer molecule which binds to LuxR and thus acts in bioluminescence regulation. This Aliivibrio fischeri (strain ATCC 700601 / ES114) (Vibrio fischeri) protein is Acyl-homoserine-lactone synthase (luxI).